Here is a 299-residue protein sequence, read N- to C-terminus: rRNA methyltransferase (299 aa).

The tract at residues 14–53 (AEKRSGRGRMAAARTTGAQSRKTAQRSGRSEADRRRRVHG) is disordered. Over residues 21 to 31 (GRMAAARTTGA) the composition is skewed to low complexity. Positions 55, 57, 82, 103, 128, and 144 each coordinate S-adenosyl-L-methionine.

The protein belongs to the class I-like SAM-binding methyltransferase superfamily. rRNA adenine N(6)-methyltransferase family.

Functionally, probable RNA methylase. Confers resistance to carbomycin and several other macrolides, lincomycin and vernamycin B, but not to all macrolide-lincosamide-streptogramin B antibiotics. This is rRNA methyltransferase (carB) from Streptomyces thermotolerans.